The primary structure comprises 143 residues: Ribosomal RNA large subunit methyltransferase H (143 aa).

Residues leucine 68 and glycine 95 each contribute to the S-adenosyl-L-methionine site.

This sequence belongs to the RNA methyltransferase RlmH family. As to quaternary structure, homodimer.

Its subcellular location is the cytoplasm. The catalysed reaction is pseudouridine(1915) in 23S rRNA + S-adenosyl-L-methionine = N(3)-methylpseudouridine(1915) in 23S rRNA + S-adenosyl-L-homocysteine + H(+). Functionally, specifically methylates the pseudouridine at position 1915 (m3Psi1915) in 23S rRNA. The polypeptide is Ribosomal RNA large subunit methyltransferase H (Mycoplasma mobile (strain ATCC 43663 / 163K / NCTC 11711) (Mesomycoplasma mobile)).